We begin with the raw amino-acid sequence, 80 residues long: U19-lycotoxin-Ls1a (80 aa).

A signal peptide spans 1 to 22; that stretch reads MSPKVQALIFIVGLITLLAAHA. A propeptide spanning residues 23-34 is cleaved from the precursor; that stretch reads QEELSDNTESER. 4 cysteine pairs are disulfide-bonded: C36-C50, C43-C55, C49-C66, and C57-C64.

This sequence belongs to the neurotoxin 02 (plectoxin) family. 05 (U19-lycotoxin) subfamily. In terms of tissue distribution, expressed by the venom gland.

The protein resides in the secreted. This is U19-lycotoxin-Ls1a from Lycosa singoriensis (Wolf spider).